A 209-amino-acid polypeptide reads, in one-letter code: COP9 signalosome complex subunit 8 (209 aa).

Residues 8-179 enclose the PCI domain; that stretch reads ESAFSFKKLL…GALDVSFNKF (172 aa). At S175 the chain carries Phosphoserine.

Belongs to the CSN8 family. In terms of assembly, component of the CSN complex, composed of COPS1/GPS1, COPS2, COPS3, COPS4, COPS5, COPS6, COPS7 (COPS7A or COPS7B), COPS8 and COPS9. In the complex, it probably interacts directly with COPS3, COPS4 and COPS7 (COPS7A or COPS7B).

It localises to the cytoplasm. Its subcellular location is the nucleus. In terms of biological role, component of the COP9 signalosome complex (CSN), a complex involved in various cellular and developmental processes. The CSN complex is an essential regulator of the ubiquitin (Ubl) conjugation pathway by mediating the deneddylation of the cullin subunits of SCF-type E3 ligase complexes, leading to decrease the Ubl ligase activity of SCF-type complexes such as SCF, CSA or DDB2. The complex is also involved in phosphorylation of p53/TP53, c-jun/JUN, IkappaBalpha/NFKBIA, ITPK1 and IRF8/ICSBP, possibly via its association with CK2 and PKD kinases. CSN-dependent phosphorylation of TP53 and JUN promotes and protects degradation by the Ubl system, respectively. The polypeptide is COP9 signalosome complex subunit 8 (COPS8) (Pongo abelii (Sumatran orangutan)).